The chain runs to 301 residues: NAD kinase 2 (301 aa).

The active-site Proton acceptor is aspartate 77. Residues 77–78 (DG), arginine 82, 151–152 (NE), lysine 162, aspartate 181, and 192–197 (TAYAFS) each bind NAD(+).

Belongs to the NAD kinase family. It depends on a divalent metal cation as a cofactor.

The protein localises to the cytoplasm. It catalyses the reaction NAD(+) + ATP = ADP + NADP(+) + H(+). Functionally, involved in the regulation of the intracellular balance of NAD and NADP, and is a key enzyme in the biosynthesis of NADP. Catalyzes specifically the phosphorylation on 2'-hydroxyl of the adenosine moiety of NAD to yield NADP. This is NAD kinase 2 from Streptomyces coelicolor (strain ATCC BAA-471 / A3(2) / M145).